We begin with the raw amino-acid sequence, 215 residues long: Pyrophosphatase PpaX (215 aa).

The active-site Nucleophile is the aspartate 9.

The protein belongs to the HAD-like hydrolase superfamily. PpaX family. It depends on Mg(2+) as a cofactor.

It carries out the reaction diphosphate + H2O = 2 phosphate + H(+). In terms of biological role, hydrolyzes pyrophosphate formed during P-Ser-HPr dephosphorylation by HPrK/P. Might play a role in controlling the intracellular pyrophosphate pool. The polypeptide is Pyrophosphatase PpaX (Bacillus mycoides (strain KBAB4) (Bacillus weihenstephanensis)).